We begin with the raw amino-acid sequence, 111 residues long: MKTAICSLLICIFLLQLMVPVNTDGTLESIVEQKVKELLAHRDNCPSTVTKTLSCTSVKATGRLASCPPGMAVTGCACGYACGSWDIRDGTTCHCQCAVMDWATARCCQLS.

Residues 1–23 (MKTAICSLLICIFLLQLMVPVNT) form the signal peptide. 5 disulfides stabilise this stretch: cysteine 55/cysteine 108, cysteine 67/cysteine 107, cysteine 76/cysteine 93, cysteine 78/cysteine 95, and cysteine 82/cysteine 97.

The protein belongs to the resistin/FIZZ family. As to quaternary structure, homodimer. Heterodimer with RETNLB. As to expression, highly expressed in bone marrow, spleen and white blood cells. Also detected at low levels in thymus, lung, trachea, white adipose tissue, nasal respiratory epithelium, colon, small intestine, kidney, liver, and heart.

The protein resides in the secreted. Probable hormone. Promotes chemotaxis in myeloid cells. This chain is Resistin-like gamma, found in Rattus norvegicus (Rat).